A 1289-amino-acid polypeptide reads, in one-letter code: Outer capsid protein lambda-2 (1289 aa).

An ATP-binding site is contributed by 893-900; the sequence is GAAAAGKS.

The protein belongs to the orthoreovirus lambda-2 protein family. In terms of assembly, interacts with protein mu-NS; in viral inclusions.

The protein resides in the virion. It carries out the reaction a 5'-end diphospho-ribonucleoside in mRNA + GTP + H(+) = a 5'-end (5'-triphosphoguanosine)-ribonucleoside in mRNA + diphosphate. The catalysed reaction is a 5'-end (5'-triphosphoguanosine)-ribonucleoside in mRNA + S-adenosyl-L-methionine = a 5'-end (N(7)-methyl 5'-triphosphoguanosine)-ribonucleoside in mRNA + S-adenosyl-L-homocysteine. Its function is as follows. Outer capsid protein involved in mRNA capping. Catalyzes the last 3 enzymatic activities for formation of the 5' cap structure on the viral plus-strand transcripts, namely the RNA guanylyltransferase, RNA-7N- and RNA-2'O-methyltransferase activities. The sequence is that of Outer capsid protein lambda-2 (L2) from Reovirus type 1 (strain Lang) (T1L).